The primary structure comprises 291 residues: Taste receptor type 2 member 16 (291 aa).

Residue methionine 1 is a topological domain, extracellular. A helical membrane pass occupies residues 2 to 22 (IPIQLTVFFMIIYVLESLTII). At 23–41 (VQSSLIVAVLGREWLQVRR) the chain is on the cytoplasmic side. A helical transmembrane segment spans residues 42 to 62 (LMPVDMILISLGISRFCLQWA). The Extracellular portion of the chain corresponds to 63-84 (SMLNNFCSYLNLNYVLCNLTIT). An N-linked (GlcNAc...) asparagine glycan is attached at asparagine 80. A helical membrane pass occupies residues 85–105 (WEFFNILTFWLNSLLTVFYCI). The Cytoplasmic portion of the chain corresponds to 106 to 125 (KVSSFTHHIFLWVRWRILRW). A helical transmembrane segment spans residues 126–146 (FPWILLGSLTIACVTIIPSAI). The Extracellular portion of the chain corresponds to 147-182 (GNYIQIQLLTMEHLPRNSTVTDRLEKFHQYQFQSHT). An N-linked (GlcNAc...) asparagine glycan is attached at asparagine 163. The chain crosses the membrane as a helical span at residues 183–203 (VALVIPFILFLASTILLMASL). Over 204–228 (TKQIQHHSTGHCNPSMKAHFTALRS) the chain is Cytoplasmic. The helical transmembrane segment at 229–249 (LAILFIVFTSYFLIILITIIG) threads the bilayer. The Extracellular segment spans residues 250–257 (TLFDKRCW). Residues 258–278 (LWVWEAFVYAFILMHSTSLML) form a helical membrane-spanning segment. The Cytoplasmic portion of the chain corresponds to 279 to 291 (SSPTLKRILKGKC).

Belongs to the G-protein coupled receptor T2R family. In terms of assembly, interacts with RTP3 and RTP4.

The protein localises to the cell membrane. Receptor that may play a role in the perception of bitterness and is gustducin-linked. May function as a bitter taste receptor for the phytonutrient beta glucopyranosides, some of which are toxic and some of which lower the risk of cancer and cardiovascular disease. The activity of this receptor may stimulate alpha gustducin, mediate PLC-beta-2 activation and lead to the gating of TRPM5. The chain is Taste receptor type 2 member 16 (TAS2R16) from Pongo pygmaeus (Bornean orangutan).